The following is a 379-amino-acid chain: MASTLFSRTFLAASHRLITPSLPQKIFNPATFLSRSLHSQLGSASTAYKSTTWARRAMASTGVETKAGYSTSSVSTSEPVVSVDWLHANLREPDLKILDASWYMPDEQRNPIQEYQVAHIPRALFFDLDGISDRKTSLPHMLPTEEAFAAGCSALGIDNKDEVVVYDGKGIFSAARVWWMFRVFGHEKVWVLDGGLPRWRASGYDVESSASGDAILKASAASEAIEKIYQGQTVSPITFQTKFQPHLVWTLDQVKNNMEDPTYQHIDARSKARFDGTAPEPRKGIRSGHIPGSKCIPFPQMFDSCNTLLPAEELKKRFDQEDISLDKPIMASCGTGVTACILAMGLHRLGKTDVPIYDGSWTEWATQPDLPIESVESSS.

The N-terminal 56 residues, 1–56, are a transit peptide targeting the mitochondrion; that stretch reads MASTLFSRTFLAASHRLITPSLPQKIFNPATFLSRSLHSQLGSASTAYKSTTWARR. The residue at position 57 (Ala57) is an N-acetylalanine. Rhodanese domains are found at residues 91 to 208 and 259 to 373; these read REPD…DVES and EDPT…LPIE. Cys333 serves as the catalytic Cysteine persulfide intermediate.

Expressed in roots, rosette and cauline leaves, stems, flowers and siliques.

The protein resides in the mitochondrion. It carries out the reaction thiosulfate + hydrogen cyanide = thiocyanate + sulfite + 2 H(+). It catalyses the reaction 2-oxo-3-sulfanylpropanoate + [thioredoxin]-dithiol = [thioredoxin]-disulfide + hydrogen sulfide + pyruvate + H(+). Functionally, catalyzes the transfer of a sulfur ion from a donor to cyanide or to other thiol compounds. Substrate preference is 3-mercaptopyruvate &gt; thiosulfate. Involved in embryo and seed development. The chain is Thiosulfate/3-mercaptopyruvate sulfurtransferase 1, mitochondrial (STR1) from Arabidopsis thaliana (Mouse-ear cress).